The chain runs to 616 residues: Membrane protein insertase YidC (616 aa).

Residues Met8–Gly28 traverse the membrane as a helical segment. The tract at residues Arg33–Asp85 is disordered. Low complexity-rich tracts occupy residues Gln36 to Ala51 and Gly62 to Pro80. 4 helical membrane-spanning segments follow: residues Leu386–Leu406, Trp460–Ile480, Tyr516–Met536, and Phe551–Ile571.

This sequence belongs to the OXA1/ALB3/YidC family. Type 1 subfamily. Interacts with the Sec translocase complex via SecD. Specifically interacts with transmembrane segments of nascent integral membrane proteins during membrane integration.

It localises to the cell inner membrane. Functionally, required for the insertion and/or proper folding and/or complex formation of integral membrane proteins into the membrane. Involved in integration of membrane proteins that insert both dependently and independently of the Sec translocase complex, as well as at least some lipoproteins. Aids folding of multispanning membrane proteins. The chain is Membrane protein insertase YidC from Methylorubrum extorquens (strain PA1) (Methylobacterium extorquens).